A 275-amino-acid polypeptide reads, in one-letter code: MSNSRQHQGHFARKRFGQNFLVDHGVIDSIVATIGPARGQRMVEIGPGLGALTGPLIERLATPESPLHAVELDRDLIGRLQQRFGALLELHAGDALAFDFRSLAAPGDKPSLRIVGNLPYNISSPLLFHLMTFADAVIDQHFMLQNEVVERMVAEPGTKAFSRLSVMLQYRYVMEKMLDVPPESFQPPPKVDSAIVRMIPYEPHELPDVDPVLLGEIVTAAFSQRRKMLRNTLGDYRETIDFDALGFDLARRAEDVSVAEYVGVAQALAALRKAG.

The S-adenosyl-L-methionine site is built by N19, L21, G46, E71, D94, and N117.

It belongs to the class I-like SAM-binding methyltransferase superfamily. rRNA adenine N(6)-methyltransferase family. RsmA subfamily.

Its subcellular location is the cytoplasm. The catalysed reaction is adenosine(1518)/adenosine(1519) in 16S rRNA + 4 S-adenosyl-L-methionine = N(6)-dimethyladenosine(1518)/N(6)-dimethyladenosine(1519) in 16S rRNA + 4 S-adenosyl-L-homocysteine + 4 H(+). In terms of biological role, specifically dimethylates two adjacent adenosines (A1518 and A1519) in the loop of a conserved hairpin near the 3'-end of 16S rRNA in the 30S particle. May play a critical role in biogenesis of 30S subunits. The polypeptide is Ribosomal RNA small subunit methyltransferase A (Burkholderia orbicola (strain MC0-3)).